A 228-amino-acid chain; its full sequence is Nuclear phosphoprotein UL3 homolog (228 aa).

The protein belongs to the alphaherpesvirinae HHV-1 UL3 family. In terms of processing, phosphorylated.

It is found in the host nucleus. This chain is Nuclear phosphoprotein UL3 homolog (MDV015), found in Gallus gallus (Chicken).